A 140-amino-acid chain; its full sequence is MKIINILFCLFLLMLNGCNSNDTNTKQTKSRQKRDLTQKEATQEKPKSKSKEDLLREKLSDDQKTQLDWLKTALTGVGKFDKFLENDEGKIKSALEHIKTELDKCNGNDEGKNTFKTTVQGFFSGGNIDNFADQATATCN.

An N-terminal signal peptide occupies residues 1–17; sequence MKIINILFCLFLLMLNG. C18 carries the N-palmitoyl cysteine lipid modification. The S-diacylglycerol cysteine moiety is linked to residue C18. Positions 22 to 57 are disordered; that stretch reads DTNTKQTKSRQKRDLTQKEATQEKPKSKSKEDLLRE. Residues 33-57 show a composition bias toward basic and acidic residues; it reads KRDLTQKEATQEKPKSKSKEDLLRE.

This sequence belongs to the Multicopy lipoprotein (Mlp) family.

It is found in the cell outer membrane. In terms of biological role, an outer membrane protein that may participate in pathogenesis. Some human Lyme disease patients have antibodies against this protein. The Mlp proteins probably undergo intragenic recombination, generating new alleles. This Borreliella burgdorferi (strain ATCC 35210 / DSM 4680 / CIP 102532 / B31) (Borrelia burgdorferi) protein is Lipoprotein MlpG.